The following is a 22-amino-acid chain: NADH dehydrogenase [ubiquinone] 1 alpha subcomplex subunit 9 (22 aa).

The tract at residues 1–22 (ASNLATGGAGPLIXKGTGGRSS) is disordered.

Belongs to the complex I NDUFA9 subunit family. As to quaternary structure, complex I is composed of about 45 different subunits. It depends on FAD as a cofactor.

Its subcellular location is the mitochondrion matrix. Accessory subunit of the mitochondrial membrane respiratory chain NADH dehydrogenase (Complex I), that is believed not to be involved in catalysis. Complex I functions in the transfer of electrons from NADH to the respiratory chain. The immediate electron acceptor for the enzyme is believed to be ubiquinone. This chain is NADH dehydrogenase [ubiquinone] 1 alpha subcomplex subunit 9, found in Solanum tuberosum (Potato).